We begin with the raw amino-acid sequence, 478 residues long: Cytochrome c biogenesis protein CcsB (478 aa).

The next 3 membrane-spanning stretches (helical) occupy residues Leu30–Ile50, Thr89–Thr109, and Phe175–Ser195. The segment at Leu453–Gly478 is disordered. The segment covering Pro456–Ala466 has biased composition (pro residues).

This sequence belongs to the Ccs1/CcsB family. In terms of assembly, may interact with CcsA.

The protein resides in the cellular thylakoid membrane. Its function is as follows. Required during biogenesis of c-type cytochromes (cytochrome c6 and cytochrome f) at the step of heme attachment. This Synechococcus sp. (strain JA-3-3Ab) (Cyanobacteria bacterium Yellowstone A-Prime) protein is Cytochrome c biogenesis protein CcsB.